The sequence spans 157 residues: 6,7-dimethyl-8-ribityllumazine synthase 1 (157 aa).

5-amino-6-(D-ribitylamino)uracil-binding positions include phenylalanine 22, 53 to 55, and 82 to 84; these read ALE and TVI. 87-88 is a (2S)-2-hydroxy-3-oxobutyl phosphate binding site; that stretch reads ET. Catalysis depends on histidine 90, which acts as the Proton donor. Residue asparagine 115 coordinates 5-amino-6-(D-ribitylamino)uracil. Histidine 129 serves as a coordination point for (2S)-2-hydroxy-3-oxobutyl phosphate.

Belongs to the DMRL synthase family. As to quaternary structure, homopentamer.

The catalysed reaction is (2S)-2-hydroxy-3-oxobutyl phosphate + 5-amino-6-(D-ribitylamino)uracil = 6,7-dimethyl-8-(1-D-ribityl)lumazine + phosphate + 2 H2O + H(+). It functions in the pathway cofactor biosynthesis; riboflavin biosynthesis; riboflavin from 2-hydroxy-3-oxobutyl phosphate and 5-amino-6-(D-ribitylamino)uracil: step 1/2. Catalyzes the formation of 6,7-dimethyl-8-ribityllumazine by condensation of 5-amino-6-(D-ribitylamino)uracil with 3,4-dihydroxy-2-butanone 4-phosphate. This is the penultimate step in the biosynthesis of riboflavin. The chain is 6,7-dimethyl-8-ribityllumazine synthase 1 (ribH1) from Brucella abortus (strain 2308).